A 1157-amino-acid chain; its full sequence is DNA-directed RNA polymerase subunit beta (1157 aa).

The protein belongs to the RNA polymerase beta chain family. As to quaternary structure, the RNAP catalytic core consists of 2 alpha, 1 beta, 1 beta' and 1 omega subunit. When a sigma factor is associated with the core the holoenzyme is formed, which can initiate transcription.

The catalysed reaction is RNA(n) + a ribonucleoside 5'-triphosphate = RNA(n+1) + diphosphate. In terms of biological role, DNA-dependent RNA polymerase catalyzes the transcription of DNA into RNA using the four ribonucleoside triphosphates as substrates. In Tropheryma whipplei (Whipple's bacillus), this protein is DNA-directed RNA polymerase subunit beta.